The primary structure comprises 140 residues: uncharacterized protein (140 aa).

N-linked (GlcNAc...) asparagine glycosylation is present at Asn-36. A helical transmembrane segment spans residues Leu-91 to Phe-107. Positions Gln-113–Asn-122 are enriched in polar residues. The segment at Gln-113–Gln-140 is disordered. Residues Thr-131–Gln-140 are compositionally biased toward acidic residues.

Its subcellular location is the endoplasmic reticulum membrane. This is an uncharacterized protein from Saccharomyces cerevisiae (strain ATCC 204508 / S288c) (Baker's yeast).